The primary structure comprises 300 residues: Dioxygenase FUM3 (300 aa).

Residues His-146, Asp-148, and His-222 each contribute to the Fe cation site.

It belongs to the PhyH family. In terms of assembly, homodimer. Fe cation serves as cofactor.

It functions in the pathway mycotoxin biosynthesis. Functionally, dioxygenase; part of the gene cluster that mediates the biosynthesis of fumonisins B1 (FB1), B2 (FB2), B3 (FB3), and B4 (FB4), which are carcinogenic mycotoxins. Within the pathway, FUM3 performs the C-5 hydroxylation present in FB1 and FB2 and which occurs late in the biosynthesis. The biosynthesis starts with the FUM1-catalyzed carbon chain assembly from one molecule of acetyl-CoA, eight molecules of malonyl-CoA, and two molecules of methionine (in S-adenosyl form). The C18 polyketide chain is released from the enzyme by a nucleophilic attack of a carbanion, which is derived from R-carbon of alanine by decarboxylation, on the carbonyl carbon of polyketide acyl chain. This step is catalyzed by the pyridoxal 5'-phosphate-dependent aminoacyl transferase FUM8. The resultant 3-keto intermediate is then stereospecifically reduced to a 3-hydroxyl product by reductase FUM13. Subsequent oxidations at C-10 by the cytochrome P450 monooxygenase FUM2, C-14 and C-15 by FUM6, FUM12 or FUM15, tricarballylic esterification of the hydroxyl groups on C-14 and C-15 by acyltransferase FUM14, and C-5 hydroxylation by 2-keto-glutarate-dependent dioxygenase FUM3 furnish the biosynthesis of fumonisins. The tricarballylic moieties are most likely derived from the citric acid cycle, and their addition to the carbon backbone may involve FUM7, FUM10, FUM11 and FUM14. In Gibberella moniliformis (strain M3125 / FGSC 7600) (Maize ear and stalk rot fungus), this protein is Dioxygenase FUM3.